Consider the following 720-residue polypeptide: Phosphoribosylformylglycinamidine synthase subunit PurL (720 aa).

Residue His-47 is part of the active site. The ATP site is built by Tyr-50 and Lys-89. Glu-91 contacts Mg(2+). Substrate contacts are provided by residues 92 to 95 (SHNH) and Arg-114. The active-site Proton acceptor is the His-93. Asp-115 lines the Mg(2+) pocket. Gln-238 serves as a coordination point for substrate. Position 266 (Asp-266) interacts with Mg(2+). A substrate-binding site is contributed by 310-312 (ESQ). Residues Asp-488 and Gly-525 each coordinate ATP. Residue Asn-526 coordinates Mg(2+). Ser-528 lines the substrate pocket.

It belongs to the FGAMS family. In terms of assembly, monomer. Part of the FGAM synthase complex composed of 1 PurL, 1 PurQ and 2 PurS subunits.

The protein resides in the cytoplasm. The enzyme catalyses N(2)-formyl-N(1)-(5-phospho-beta-D-ribosyl)glycinamide + L-glutamine + ATP + H2O = 2-formamido-N(1)-(5-O-phospho-beta-D-ribosyl)acetamidine + L-glutamate + ADP + phosphate + H(+). It functions in the pathway purine metabolism; IMP biosynthesis via de novo pathway; 5-amino-1-(5-phospho-D-ribosyl)imidazole from N(2)-formyl-N(1)-(5-phospho-D-ribosyl)glycinamide: step 1/2. Functionally, part of the phosphoribosylformylglycinamidine synthase complex involved in the purines biosynthetic pathway. Catalyzes the ATP-dependent conversion of formylglycinamide ribonucleotide (FGAR) and glutamine to yield formylglycinamidine ribonucleotide (FGAM) and glutamate. The FGAM synthase complex is composed of three subunits. PurQ produces an ammonia molecule by converting glutamine to glutamate. PurL transfers the ammonia molecule to FGAR to form FGAM in an ATP-dependent manner. PurS interacts with PurQ and PurL and is thought to assist in the transfer of the ammonia molecule from PurQ to PurL. The polypeptide is Phosphoribosylformylglycinamidine synthase subunit PurL (Cereibacter sphaeroides (strain KD131 / KCTC 12085) (Rhodobacter sphaeroides)).